The sequence spans 197 residues: Interleukin-17C (197 aa).

Residues 1–18 form the signal peptide; it reads MTLLPGLLFLTWLHTCLA. Disulfide bonds link cysteine 129–cysteine 189 and cysteine 134–cysteine 191.

It belongs to the IL-17 family. Binds to a heterodimer formed by IL17RA and IL17RE.

The protein resides in the secreted. In terms of biological role, cytokine that plays a crucial role in innate immunity of the epithelium, including to intestinal bacterial pathogens, in an autocrine manner. Stimulates the production of antibacterial peptides and pro-inflammatory molecules for host defense by signaling through the NF-kappa-B and MAPK pathways. Acts synergically with IL22 in inducing the expression of antibacterial peptides, including S100A8, S100A9, REG3A and REG3G. Synergy is also observed with TNF and IL1B in inducing DEFB2 from keratinocytes. Depending on the type of insult, may have both protective and pathogenic properties, either by maintaining epithelial homeostasis after an inflammatory challenge or by promoting inflammatory phenotype. Enhanced IL17C/IL17RE signaling may also lead to greater susceptibility to autoimmune diseases. This chain is Interleukin-17C (IL17C), found in Homo sapiens (Human).